The sequence spans 279 residues: MNYNDKSLSALKLGQKTEYKSEYDPTLLQPVPRKLNRDGLGITEQQPFDRGADVWTCYELSWLNENGLPQVAIADVAIDFRSENLIESKSFKLYLNSFNQTKFASLEQVEQTLAKDLSQCASGQVSVKVYKLSAYTQQPIVDFAGECIDEQDIQIDSYEFSNEHLASVAEGEVVEETLVSHLLKSNCLITSQPDWGSVQIHYVGKKLNREKLLRYLVSFREHNEFHEQCVERIFIDLIQFTQPEKLTVYARYTRRGGLDINPFRSNFESVPQNLRMARQ.

86 to 88 (IES) contacts substrate. 88–89 (SK) is an NADPH binding site. The Thioimide intermediate role is filled by cysteine 187. Aspartate 194 (proton donor) is an active-site residue. 226–227 (HE) serves as a coordination point for substrate. NADPH is bound at residue 255-256 (RG).

It belongs to the GTP cyclohydrolase I family. QueF type 2 subfamily. As to quaternary structure, homodimer.

It is found in the cytoplasm. The catalysed reaction is 7-aminomethyl-7-carbaguanine + 2 NADP(+) = 7-cyano-7-deazaguanine + 2 NADPH + 3 H(+). It participates in tRNA modification; tRNA-queuosine biosynthesis. Functionally, catalyzes the NADPH-dependent reduction of 7-cyano-7-deazaguanine (preQ0) to 7-aminomethyl-7-deazaguanine (preQ1). The polypeptide is NADPH-dependent 7-cyano-7-deazaguanine reductase (Actinobacillus pleuropneumoniae serotype 5b (strain L20)).